We begin with the raw amino-acid sequence, 336 residues long: Dihydroorotate dehydrogenase (quinone) (336 aa).

FMN contacts are provided by residues 62 to 66 (AGLDK) and Thr-86. Lys-66 provides a ligand contact to substrate. 111–115 (NRFGF) contacts substrate. Residues Asn-139 and Asn-172 each coordinate FMN. Residue Asn-172 participates in substrate binding. Ser-175 acts as the Nucleophile in catalysis. A substrate-binding site is contributed by Asn-177. Residues Lys-217 and Thr-245 each coordinate FMN. 246–247 (NT) is a binding site for substrate. FMN-binding positions include Gly-268, Gly-297, and 318–319 (YS).

It belongs to the dihydroorotate dehydrogenase family. Type 2 subfamily. As to quaternary structure, monomer. FMN is required as a cofactor.

It is found in the cell membrane. It catalyses the reaction (S)-dihydroorotate + a quinone = orotate + a quinol. The protein operates within pyrimidine metabolism; UMP biosynthesis via de novo pathway; orotate from (S)-dihydroorotate (quinone route): step 1/1. Functionally, catalyzes the conversion of dihydroorotate to orotate with quinone as electron acceptor. The polypeptide is Dihydroorotate dehydrogenase (quinone) (Photobacterium profundum (strain SS9)).